A 520-amino-acid chain; its full sequence is Target of rapamycin complex 2 subunit MAPKAP1 (520 aa).

The 129-residue stretch at 139–267 folds into the CRIM domain; it reads QSILSVRLEQ…GFSTLALVEK (129 aa). Positions 279–353 are SIN1-type RBD; the sequence is LFVRINAAHG…QNSLEFCLVR (75 aa). A disordered region spans residues 310 to 333; sequence KRRKGSQRNSGPQYRLEKQSQPNV. The SIN1-type PH domain maps to 382 to 487; sequence QYKSFKVSMI…IVLKVNYILE (106 aa). 3 residues coordinate a 1,2-diacyl-sn-glycero-3-phospho-(1D-myo-inositol-3,4,5-trisphosphate): Arg393, Lys428, and Lys464.

The protein belongs to the SIN1 family. As to quaternary structure, component of the mechanistic target of rapamycin complex 2 (mTORC2), consisting in two heterotretramers composed of MTOR, MLST8, RICTOR and MAPKAP1/SIN1. Contrary to mTORC1, mTORC2 does not bind to and is not sensitive to FKBP12-rapamycin.

The protein resides in the cell membrane. Its subcellular location is the endoplasmic reticulum membrane. It is found in the early endosome membrane. It localises to the late endosome membrane. The protein localises to the lysosome membrane. The protein resides in the golgi apparatus membrane. Its subcellular location is the mitochondrion outer membrane. It is found in the cytoplasm. It localises to the perinuclear region. The protein localises to the nucleus. Its activity is regulated as follows. Phosphatidylinositol 3,4,5-trisphosphate (PI(3,4,5)P3) promotes MTOR activation by relieving MAPKAP1/SIN1-mediated inhibition of MTOR that takes place in absence of PI(3,4,5)P3. In terms of biological role, component of the mechanistic target of rapamycin complex 2 (mTORC2), which transduces signals from growth factors to pathways involved in proliferation, cytoskeletal organization, lipogenesis and anabolic output. In response to growth factors, mTORC2 phosphorylates and activates AGC protein kinase family members, including AKT (AKT1, AKT2 and AKT3), PKC (PRKCA, PRKCB and PRKCE) and SGK1. In contrast to mTORC1, mTORC2 is nutrient-insensitive. Within the mTORC2 complex, MAPKAP1/SIN1 acts as a substrate adapter which recognizes and binds AGC protein kinase family members for phosphorylation by MTOR. In Xenopus tropicalis (Western clawed frog), this protein is Target of rapamycin complex 2 subunit MAPKAP1 (mapkap1).